Here is a 712-residue protein sequence, read N- to C-terminus: UvrABC system protein B (712 aa).

The region spanning Arg-35–Arg-421 is the Helicase ATP-binding domain. Gly-48–Ser-55 contributes to the ATP binding site. The Beta-hairpin motif lies at Tyr-101–Ile-124. The Helicase C-terminal domain occupies Gln-438–Val-604. Residues Thr-625 to Glu-655 are disordered. The UVR domain occupies Ala-667–Glu-702.

The protein belongs to the UvrB family. Forms a heterotetramer with UvrA during the search for lesions. Interacts with UvrC in an incision complex.

The protein localises to the cytoplasm. The UvrABC repair system catalyzes the recognition and processing of DNA lesions. A damage recognition complex composed of 2 UvrA and 2 UvrB subunits scans DNA for abnormalities. Upon binding of the UvrA(2)B(2) complex to a putative damaged site, the DNA wraps around one UvrB monomer. DNA wrap is dependent on ATP binding by UvrB and probably causes local melting of the DNA helix, facilitating insertion of UvrB beta-hairpin between the DNA strands. Then UvrB probes one DNA strand for the presence of a lesion. If a lesion is found the UvrA subunits dissociate and the UvrB-DNA preincision complex is formed. This complex is subsequently bound by UvrC and the second UvrB is released. If no lesion is found, the DNA wraps around the other UvrB subunit that will check the other stand for damage. This is UvrABC system protein B from Streptomyces coelicolor (strain ATCC BAA-471 / A3(2) / M145).